Consider the following 416-residue polypeptide: MKSVLRIAAAIFWLWLFIVLGVIGSGNVRDTDDEISLLESQLVVTSPSQLLMVPLTLIQAAASKGAVCLDGTLPGYHLHPGSGSGANRWLIQLEGGGWCNTRRSCIFRKTTRRGSSNHMEKVLAFTGILSNKSNENPDFFNWNRVKLRYCDGASFTGDSQDESSQLYYRGQRIWHSAMEELLSKGMQKAEQALLSGCSAGGLASILHCDQFKELFPGTTTVKCLSDAGMFMDAVDVSGGHSLRKMFQGVVTVQNLQKELSTACTKHLDPTSCFFPQNLVSGIKTPMFLLNAAYDAWQVQESLAPPSVDLSGSWKACKSDHSHCNSSQIQFFQDFRTHMVDAVKSFATSTHNGVFINSCFAHCQSERQDTWYAPDSPTLHGKTVAESVGDWYFDRTTVKAIDCPYPCDKTCHNLIFK.

The N-terminal stretch at 1–25 (MKSVLRIAAAIFWLWLFIVLGVIGS) is a signal peptide. The N-linked (GlcNAc...) asparagine glycan is linked to N131. Catalysis depends on charge relay system residues S198 and D294. Residue N324 is glycosylated (N-linked (GlcNAc...) asparagine). H361 serves as the catalytic Charge relay system.

It belongs to the pectinacetylesterase family.

It is found in the secreted. The protein localises to the cell wall. Hydrolyzes acetyl esters in homogalacturonan regions of pectin. In type I primary cell wall, galacturonic acid residues of pectin can be acetylated at the O-2 and O-3 positions. Decreasing the degree of acetylation of pectin gels in vitro alters their physical properties. This is Pectin acetylesterase 3 from Arabidopsis thaliana (Mouse-ear cress).